The primary structure comprises 225 residues: 3-dehydroquinate dehydratase (225 aa).

Residues serine 6, glutamate 30–arginine 32, and arginine 62 contribute to the 3-dehydroquinate site. Catalysis depends on histidine 118, which acts as the Proton donor/acceptor. Catalysis depends on lysine 143, which acts as the Schiff-base intermediate with substrate. 3 residues coordinate 3-dehydroquinate: arginine 186, serine 205, and glutamine 209.

The protein belongs to the type-I 3-dehydroquinase family. In terms of assembly, homodimer.

It carries out the reaction 3-dehydroquinate = 3-dehydroshikimate + H2O. Its pathway is metabolic intermediate biosynthesis; chorismate biosynthesis; chorismate from D-erythrose 4-phosphate and phosphoenolpyruvate: step 3/7. Involved in the third step of the chorismate pathway, which leads to the biosynthesis of aromatic amino acids. Catalyzes the cis-dehydration of 3-dehydroquinate (DHQ) and introduces the first double bond of the aromatic ring to yield 3-dehydroshikimate. The sequence is that of 3-dehydroquinate dehydratase from Streptococcus pneumoniae (strain Hungary19A-6).